The following is a 367-amino-acid chain: Sulfate/thiosulfate import ATP-binding protein CysA 2 (367 aa).

The ABC transporter domain maps to 3-237; that stretch reads VRVQNIRKEF…PVSPFVYGFI (235 aa). ATP is bound at residue 35 to 42; it reads GPSGSGKT.

This sequence belongs to the ABC transporter superfamily. Sulfate/tungstate importer (TC 3.A.1.6) family. In terms of assembly, the complex is composed of two ATP-binding proteins (CysA), two transmembrane proteins (CysT and CysW) and a solute-binding protein (CysP).

It is found in the cell inner membrane. The enzyme catalyses sulfate(out) + ATP + H2O = sulfate(in) + ADP + phosphate + H(+). It catalyses the reaction thiosulfate(out) + ATP + H2O = thiosulfate(in) + ADP + phosphate + H(+). Functionally, part of the ABC transporter complex CysAWTP involved in sulfate/thiosulfate import. Responsible for energy coupling to the transport system. This chain is Sulfate/thiosulfate import ATP-binding protein CysA 2, found in Rhizobium meliloti (strain 1021) (Ensifer meliloti).